A 101-amino-acid chain; its full sequence is MILEHVLVLSAYLFLIGLYGLITSRNMVRALMCLELILNAVNMNLVTFSDFFDNSQLKGDIFCIFVIAIAAAEAAIGLAIVSSIYRNRKSTRINQSTLLNK.

A run of 3 helical transmembrane segments spans residues 2–22 (ILEH…YGLI), 32–52 (MCLE…SDFF), and 61–81 (IFCI…LAIV).

It belongs to the complex I subunit 4L family. In terms of assembly, NDH is composed of at least 16 different subunits, 5 of which are encoded in the nucleus.

Its subcellular location is the plastid. It localises to the chloroplast thylakoid membrane. The catalysed reaction is a plastoquinone + NADH + (n+1) H(+)(in) = a plastoquinol + NAD(+) + n H(+)(out). It catalyses the reaction a plastoquinone + NADPH + (n+1) H(+)(in) = a plastoquinol + NADP(+) + n H(+)(out). In terms of biological role, NDH shuttles electrons from NAD(P)H:plastoquinone, via FMN and iron-sulfur (Fe-S) centers, to quinones in the photosynthetic chain and possibly in a chloroplast respiratory chain. The immediate electron acceptor for the enzyme in this species is believed to be plastoquinone. Couples the redox reaction to proton translocation, and thus conserves the redox energy in a proton gradient. In Draba nemorosa (Woodland whitlowgrass), this protein is NAD(P)H-quinone oxidoreductase subunit 4L, chloroplastic.